The chain runs to 567 residues: Structural protein ORF567 (567 aa).

The segment at 7-393 (INALLGFPEE…MPIEHKPEQQ (387 aa)) is disordered. The span at 65–79 (TPTPIRPAPPPPPPI) shows a compositional bias: pro residues. Basic and acidic residues predominate over residues 180 to 200 (PKREPEHHTHGSTNNEHESKR). The span at 219–231 (THQTSPSHSSGGT) shows a compositional bias: low complexity. Composition is skewed to pro residues over residues 253–278 (MPIPPNPPIVREPTPTPQPTPIPTPP) and 285–299 (TPTPPRTPQPTPPPT). Over residues 300 to 312 (HGSSSTNSSGSTN) the composition is skewed to low complexity. Residues 319–335 (PKPIPIPPTPPPPPPHH) show a composition bias toward pro residues. Residues 343 to 353 (PKHESEHHDHG) are compositionally biased toward basic and acidic residues. Residues 354–372 (SSSTNSSSSTSNSSSGGTN) show a composition bias toward low complexity.

The protein localises to the virion. This chain is Structural protein ORF567, found in Acidianus two-tailed virus (ATV).